Consider the following 135-residue polypeptide: Small ribosomal subunit protein uS11 (135 aa).

Belongs to the universal ribosomal protein uS11 family. Part of the 30S ribosomal subunit. Interacts with proteins S7 and S18. Binds to IF-3.

Functionally, located on the platform of the 30S subunit, it bridges several disparate RNA helices of the 16S rRNA. Forms part of the Shine-Dalgarno cleft in the 70S ribosome. The sequence is that of Small ribosomal subunit protein uS11 from Polynucleobacter asymbioticus (strain DSM 18221 / CIP 109841 / QLW-P1DMWA-1) (Polynucleobacter necessarius subsp. asymbioticus).